We begin with the raw amino-acid sequence, 99 residues long: Integration host factor subunit alpha (99 aa).

It belongs to the bacterial histone-like protein family. As to quaternary structure, heterodimer of an alpha and a beta chain.

In terms of biological role, this protein is one of the two subunits of integration host factor, a specific DNA-binding protein that functions in genetic recombination as well as in transcriptional and translational control. The polypeptide is Integration host factor subunit alpha (ihfA) (Mannheimia haemolytica (Pasteurella haemolytica)).